Reading from the N-terminus, the 358-residue chain is Chorismate synthase (358 aa).

Position 48 (Arg-48) interacts with NADP(+). Residues 125 to 127 (RAS), Ser-277, 292 to 296 (KPIPS), and Arg-318 each bind FMN.

The protein belongs to the chorismate synthase family. In terms of assembly, homotetramer. FMNH2 serves as cofactor.

It catalyses the reaction 5-O-(1-carboxyvinyl)-3-phosphoshikimate = chorismate + phosphate. It participates in metabolic intermediate biosynthesis; chorismate biosynthesis; chorismate from D-erythrose 4-phosphate and phosphoenolpyruvate: step 7/7. Functionally, catalyzes the anti-1,4-elimination of the C-3 phosphate and the C-6 proR hydrogen from 5-enolpyruvylshikimate-3-phosphate (EPSP) to yield chorismate, which is the branch point compound that serves as the starting substrate for the three terminal pathways of aromatic amino acid biosynthesis. This reaction introduces a second double bond into the aromatic ring system. The protein is Chorismate synthase of Desulfatibacillum aliphaticivorans.